We begin with the raw amino-acid sequence, 212 residues long: RNA chaperone ProQ (212 aa).

Residues 107–153 (QDKAKAKRVAQAKSANPAAKTAKKPVKKPVAKRPKQTQSSKPAKEPV) are disordered. Positions 117-126 (QAKSANPAAK) are enriched in low complexity. Positions 127-141 (TAKKPVKKPVAKRPK) are enriched in basic residues.

The protein belongs to the ProQ family.

The protein localises to the cytoplasm. RNA chaperone with significant RNA binding, RNA strand exchange and RNA duplexing activities. The polypeptide is RNA chaperone ProQ (Shewanella halifaxensis (strain HAW-EB4)).